The primary structure comprises 271 residues: Mannosyl-3-phosphoglycerate phosphatase (271 aa).

The Nucleophile role is filled by D13. Mg(2+) is bound by residues D13, D15, and D214.

Belongs to the HAD-like hydrolase superfamily. MPGP family. The cofactor is Mg(2+).

Its subcellular location is the cytoplasm. The enzyme catalyses 2-O-(alpha-D-mannosyl)-3-phosphoglycerate + H2O = (2R)-2-O-(alpha-D-mannosyl)-glycerate + phosphate. This chain is Mannosyl-3-phosphoglycerate phosphatase (yedP), found in Shigella dysenteriae serotype 1 (strain Sd197).